We begin with the raw amino-acid sequence, 360 residues long: Phospho-N-acetylmuramoyl-pentapeptide-transferase (360 aa).

Residues 1-25 (MLVWLAEHLVKYYSGFNVFSYLTFR) lie on the Periplasmic side of the membrane. Residues 26-46 (AIVSLLTALFISLWMGPRMIA) form a helical membrane-spanning segment. Residues 47–71 (RLQKLSFGQVVRNDGPESHFSKRGT) are Cytoplasmic-facing. The chain crosses the membrane as a helical span at residues 72–92 (PTMGGIMILTAIVISVLLWAY). A topological domain (periplasmic) is located at residue Pro93. The chain crosses the membrane as a helical span at residues 94–114 (SNPYVWCVLVVLIGYGIIGFV). At 115 to 131 (DDYRKVVRKDTKGLIAR) the chain is on the cytoplasmic side. The helical transmembrane segment at 132–152 (WKYFWMSVIALGVAFALYLVG) threads the bilayer. At 153 to 167 (KDTPATQLVVPFFKD) the chain is on the periplasmic side. The helical transmembrane segment at 168-188 (VMPQLGLFYILLSYFVIVGTG) threads the bilayer. At 189–198 (NAVNLTDGLD) the chain is on the cytoplasmic side. Residues 199 to 219 (GLAIMPTVFVAAGFALVAWAT) traverse the membrane as a helical segment. Residues 220 to 235 (GNMNFANYLHIPYLRH) are Periplasmic-facing. Residues 236–256 (AGELVIVCTAIVGAGLGFLWF) form a helical membrane-spanning segment. Over 257–262 (NTYPAQ) the chain is Cytoplasmic. A helical transmembrane segment spans residues 263 to 283 (VFMGDVGSLALGGALGIIAVL). The Periplasmic segment spans residues 284-287 (LRQE). A helical transmembrane segment spans residues 288–308 (FLLVIMGGVFVVETLSVILQV). Topologically, residues 309 to 337 (GSFKLRGQRIFRMAPIHHHYELKGWPEPR) are cytoplasmic. A helical membrane pass occupies residues 338–358 (VIVRFWIISLMLVLIGLATLK). Residues 359–360 (VR) are Periplasmic-facing.

This sequence belongs to the glycosyltransferase 4 family. MraY subfamily. The cofactor is Mg(2+).

Its subcellular location is the cell inner membrane. It catalyses the reaction UDP-N-acetyl-alpha-D-muramoyl-L-alanyl-gamma-D-glutamyl-meso-2,6-diaminopimeloyl-D-alanyl-D-alanine + di-trans,octa-cis-undecaprenyl phosphate = di-trans,octa-cis-undecaprenyl diphospho-N-acetyl-alpha-D-muramoyl-L-alanyl-D-glutamyl-meso-2,6-diaminopimeloyl-D-alanyl-D-alanine + UMP. It participates in cell wall biogenesis; peptidoglycan biosynthesis. Functionally, catalyzes the initial step of the lipid cycle reactions in the biosynthesis of the cell wall peptidoglycan: transfers peptidoglycan precursor phospho-MurNAc-pentapeptide from UDP-MurNAc-pentapeptide onto the lipid carrier undecaprenyl phosphate, yielding undecaprenyl-pyrophosphoryl-MurNAc-pentapeptide, known as lipid I. In Salmonella agona (strain SL483), this protein is Phospho-N-acetylmuramoyl-pentapeptide-transferase.